The sequence spans 60 residues: Protein BNLF2a (60 aa).

Polar residues predominate over residues 14–26; the sequence is SSACGLPGSSTET. Residues 14 to 34 are disordered; that stretch reads SSACGLPGSSTETRPSHPCPE. The chain crosses the membrane as a helical span at residues 41–59; sequence LRLLLVVLCVLFGLLCLLL.

The protein belongs to the lymphocryptovirus BNLF2a family. Interacts with host TAP1 and TAP2.

It is found in the host endoplasmic reticulum membrane. Functionally, participates in viral evasion from HLA class I-restricted T-cell immunity. Associates with host TAP1 and TAP2 and prevents TAP-mediated peptide transport and subsequent loading. This is Protein BNLF2a from Homo sapiens (Human).